The sequence spans 436 residues: Enolase (436 aa).

A (2R)-2-phosphoglycerate-binding site is contributed by Gln-167. Glu-209 serves as the catalytic Proton donor. Residues Asp-246, Glu-291, and Asp-318 each contribute to the Mg(2+) site. (2R)-2-phosphoglycerate-binding residues include Lys-343, Arg-372, Ser-373, and Lys-394. The active-site Proton acceptor is the Lys-343.

It belongs to the enolase family. Component of the RNA degradosome, a multiprotein complex involved in RNA processing and mRNA degradation. Mg(2+) serves as cofactor.

It is found in the cytoplasm. Its subcellular location is the secreted. It localises to the cell surface. It catalyses the reaction (2R)-2-phosphoglycerate = phosphoenolpyruvate + H2O. The protein operates within carbohydrate degradation; glycolysis; pyruvate from D-glyceraldehyde 3-phosphate: step 4/5. Catalyzes the reversible conversion of 2-phosphoglycerate (2-PG) into phosphoenolpyruvate (PEP). It is essential for the degradation of carbohydrates via glycolysis. The polypeptide is Enolase (Haemophilus influenzae (strain 86-028NP)).